The following is a 2159-amino-acid chain: Autophagy-related protein 2 (2159 aa).

8 disordered regions span residues 98-126 (KGAN…PALP), 292-403 (LSPA…DIDS), 428-475 (DHEG…LGFN), 490-552 (TMLP…NEEA), 585-612 (GGWA…AGRE), 624-682 (VPLD…TASA), 726-766 (FDGH…RTPV), and 980-1001 (TVTS…TPIG). Basic and acidic residues-rich tracts occupy residues 300-315 (DISE…RSSE) and 380-401 (GRFD…HEDI). Composition is skewed to polar residues over residues 449 to 475 (PSEN…LGFN), 507 to 517 (HSQPTLPSSTA), and 540 to 549 (ADSSVSSTLN). Composition is skewed to polar residues over residues 630–642 (SDTT…TILP) and 669–681 (QASS…STAS). The segment covering 728 to 737 (GHSDSSRSRT) has biased composition (basic and acidic residues).

It belongs to the ATG2 family.

The protein resides in the preautophagosomal structure membrane. Its subcellular location is the endoplasmic reticulum membrane. The enzyme catalyses a 1,2-diacyl-sn-glycero-3-phosphocholine(in) = a 1,2-diacyl-sn-glycero-3-phosphocholine(out). The catalysed reaction is a 1,2-diacyl-sn-glycero-3-phospho-L-serine(in) = a 1,2-diacyl-sn-glycero-3-phospho-L-serine(out). It carries out the reaction a 1,2-diacyl-sn-glycero-3-phosphoethanolamine(in) = a 1,2-diacyl-sn-glycero-3-phosphoethanolamine(out). In terms of biological role, lipid transfer protein required for autophagosome completion and peroxisome degradation. Tethers the edge of the isolation membrane (IM) to the endoplasmic reticulum (ER) and mediates direct lipid transfer from ER to IM for IM expansion. Atg2 binds to the ER exit site (ERES), which is the membrane source for autophagosome formation, using basic residues in its N-terminal region (NR) and to the expanding edge of the IM through its C-terminal region. The latter binding is assisted by an atg18-PtdIns3P interaction. Atg2 then extracts phospholipids from the membrane source using its NR and transfers them to atg9 to the IM through its predicted beta-sheet-rich structure for membrane expansion. This is Autophagy-related protein 2 (atg2) from Sclerotinia sclerotiorum (strain ATCC 18683 / 1980 / Ss-1) (White mold).